A 351-amino-acid polypeptide reads, in one-letter code: Cytosolic sulfotransferase 11 (351 aa).

Residue 98–103 (KGGTTW) coordinates 3'-phosphoadenylyl sulfate. His163 acts as the Proton acceptor in catalysis. Residues Arg184, Ser192, Tyr250, and 316–318 (RKG) contribute to the 3'-phosphoadenylyl sulfate site.

The protein belongs to the sulfotransferase 1 family.

It is found in the cytoplasm. Functionally, sulfotransferase that utilizes 3'-phospho-5'-adenylyl sulfate (PAPS) as sulfonate donor. The polypeptide is Cytosolic sulfotransferase 11 (SOT11) (Arabidopsis thaliana (Mouse-ear cress)).